The following is a 365-amino-acid chain: MKMDVMSFIMNIINVMINTIIDYLNVNRVLALLMAFLMAGGIASMINKNFIIKYFGSNTPKYISYTVAAVSGSLLAVCSCTILPLFASIYKRGAGIGPATTFLFSGPAINVLAIFYSAALLGWDIGFLRAVFAVVVSILIGLSMEIIFKSHEKKRALRVPKADKISDRPLYQTITFFALQFIMLLVITASPKLFPTLSMPLYDGFLLKHLLFIILGIILAVTTKIWFKDEEIKNWLRESFTLLKIVFPLLIIGVAIAGAIKAIIPPSYIATYVGGNSITANFIASFIGALMYFATLTEVPIIKALMELGMGVGPAMALLLAGPSLSIPTVLTISKVLGKTKALTYLGLVVIFSTICGYIAGIILR.

Transmembrane regions (helical) follow at residues methionine 6 to valine 26, leucine 32 to isoleucine 52, valine 67 to alanine 87, alanine 108 to leucine 128, alanine 130 to serine 150, isoleucine 174 to phenylalanine 194, leucine 201 to valine 221, isoleucine 245 to proline 265, phenylalanine 282 to isoleucine 302, leucine 308 to proline 328, and threonine 344 to leucine 364.

Belongs to the UPF0718 family.

It localises to the cell membrane. This chain is UPF0718 protein MJ0584, found in Methanocaldococcus jannaschii (strain ATCC 43067 / DSM 2661 / JAL-1 / JCM 10045 / NBRC 100440) (Methanococcus jannaschii).